A 369-amino-acid polypeptide reads, in one-letter code: Anhydro-N-acetylmuramic acid kinase (369 aa).

12–19 contacts ATP; the sequence is GTSLDGVD.

This sequence belongs to the anhydro-N-acetylmuramic acid kinase family.

The catalysed reaction is 1,6-anhydro-N-acetyl-beta-muramate + ATP + H2O = N-acetyl-D-muramate 6-phosphate + ADP + H(+). It functions in the pathway amino-sugar metabolism; 1,6-anhydro-N-acetylmuramate degradation. Its pathway is cell wall biogenesis; peptidoglycan recycling. Functionally, catalyzes the specific phosphorylation of 1,6-anhydro-N-acetylmuramic acid (anhMurNAc) with the simultaneous cleavage of the 1,6-anhydro ring, generating MurNAc-6-P. Is required for the utilization of anhMurNAc either imported from the medium or derived from its own cell wall murein, and thus plays a role in cell wall recycling. The protein is Anhydro-N-acetylmuramic acid kinase of Escherichia coli (strain SMS-3-5 / SECEC).